Consider the following 713-residue polypeptide: RNA-binding protein vts1 (713 aa).

The span at 154-188 (NSGLSLDKSLPSSPKGDSPSLSSSLPSLTTKSNLS) shows a compositional bias: low complexity. Disordered stretches follow at residues 154 to 208 (NSGL…SSKH), 254 to 336 (EPPA…RDRG), 356 to 389 (DESSRSRWSNISYSPPPPPPPPELLNHSPKSRPL), 554 to 596 (EKIE…GNEL), and 667 to 713 (KAAK…SSMD). Polar residues-rich tracts occupy residues 189-208 (GNLNMVTPASTQGPAFSSKH) and 258-281 (SSASTSPRNTPTPSNNGTSINANV). 2 stretches are compositionally biased toward low complexity: residues 282–297 (TSSLTSNSTGKTSKTT) and 304–320 (SKKSLPSNSTPSKPNTS). The segment covering 321–330 (FFETPHNNIW) has biased composition (polar residues). A compositionally biased stretch (pro residues) spans 369–378 (SPPPPPPPPE). Positions 559-569 (PPNNSKNQTYR) are enriched in polar residues. A compositionally biased stretch (basic residues) spans 570–583 (RSSRGSNKTRKSIS). The SAM domain occupies 595–656 (ELPQDIPSWL…LKSFQEVAPL (62 aa)). Residues 670 to 681 (KNQSSESLTSFK) show a composition bias toward polar residues. S673 bears the Phosphoserine mark. Positions 691–702 (SGSMSNEISSNS) are enriched in low complexity. Residues 703–713 (TKQDVSSSSMD) show a composition bias toward polar residues.

The protein belongs to the VTS1 family. Monomer. Binds to RNA.

It localises to the cytoplasm. The protein localises to the cytosol. It is found in the P-body. Its function is as follows. RNA-binding protein involved in post-transcriptional regulation through transcript degradation. The sequence is that of RNA-binding protein vts1 from Schizosaccharomyces pombe (strain 972 / ATCC 24843) (Fission yeast).